Reading from the N-terminus, the 233-residue chain is Ribosomal RNA large subunit methyltransferase E (233 aa).

S-adenosyl-L-methionine-binding residues include Gly-80, Trp-82, Asp-108, Asp-124, and Asp-148. The active-site Proton acceptor is the Lys-188.

The protein belongs to the class I-like SAM-binding methyltransferase superfamily. RNA methyltransferase RlmE family.

The protein localises to the cytoplasm. The enzyme catalyses uridine(2552) in 23S rRNA + S-adenosyl-L-methionine = 2'-O-methyluridine(2552) in 23S rRNA + S-adenosyl-L-homocysteine + H(+). Its function is as follows. Specifically methylates the uridine in position 2552 of 23S rRNA at the 2'-O position of the ribose in the fully assembled 50S ribosomal subunit. The sequence is that of Ribosomal RNA large subunit methyltransferase E from Ruegeria pomeroyi (strain ATCC 700808 / DSM 15171 / DSS-3) (Silicibacter pomeroyi).